A 199-amino-acid polypeptide reads, in one-letter code: Putative inactive ribonuclease 11 (199 aa).

The first 16 residues, 1 to 16 (METFPLLLLSLGLVLA), serve as a signal peptide directing secretion. Residue Asn-61 is glycosylated (N-linked (GlcNAc...) asparagine). His-82 functions as the Proton acceptor in the catalytic mechanism. Asn-89 and Asn-111 each carry an N-linked (GlcNAc...) asparagine glycan. 2 cysteine pairs are disulfide-bonded: Cys-98–Cys-158 and Cys-114–Cys-169. 115–119 (KWSNN) is a binding site for substrate.

This sequence belongs to the pancreatic ribonuclease family.

The protein localises to the secreted. This chain is Putative inactive ribonuclease 11 (RNASE11), found in Homo sapiens (Human).